The primary structure comprises 610 residues: UvrABC system protein C (610 aa).

Positions 16–94 (SQPGVYRMYD…IKLYQPRYNV (79 aa)) constitute a GIY-YIG domain. In terms of domain architecture, UVR spans 204 to 239 (DQVLTQLISRMETASQNLEFEEAARIRDQIQAVRRV).

It belongs to the UvrC family. As to quaternary structure, interacts with UvrB in an incision complex.

It localises to the cytoplasm. Functionally, the UvrABC repair system catalyzes the recognition and processing of DNA lesions. UvrC both incises the 5' and 3' sides of the lesion. The N-terminal half is responsible for the 3' incision and the C-terminal half is responsible for the 5' incision. In Escherichia coli O1:K1 / APEC, this protein is UvrABC system protein C.